A 454-amino-acid polypeptide reads, in one-letter code: Bifunctional protein GlmU (454 aa).

The interval 1-226 is pyrophosphorylase; sequence MSTTVIILAA…AFEVEGVNDR (226 aa). Residues 8–11, lysine 22, glutamine 73, 78–79, 100–102, glycine 137, glutamate 151, asparagine 166, and asparagine 224 contribute to the UDP-N-acetyl-alpha-D-glucosamine site; these read LAAG, GT, and YGD. Aspartate 102 provides a ligand contact to Mg(2+). Asparagine 224 is a Mg(2+) binding site. Residues 227–247 are linker; the sequence is LQLAALEREFQKQQAKELMQQ. Positions 248–454 are N-acetyltransferase; it reads GVTFADPARF…NYQRPQKLKK (207 aa). UDP-N-acetyl-alpha-D-glucosamine contacts are provided by arginine 330 and lysine 348. Histidine 360 serves as the catalytic Proton acceptor. Residues tyrosine 363 and asparagine 374 each contribute to the UDP-N-acetyl-alpha-D-glucosamine site. Residues alanine 377, 383-384, serine 402, alanine 420, and arginine 437 each bind acetyl-CoA; that span reads NY.

The protein in the N-terminal section; belongs to the N-acetylglucosamine-1-phosphate uridyltransferase family. This sequence in the C-terminal section; belongs to the transferase hexapeptide repeat family. In terms of assembly, homotrimer. Mg(2+) is required as a cofactor.

It is found in the cytoplasm. The enzyme catalyses alpha-D-glucosamine 1-phosphate + acetyl-CoA = N-acetyl-alpha-D-glucosamine 1-phosphate + CoA + H(+). The catalysed reaction is N-acetyl-alpha-D-glucosamine 1-phosphate + UTP + H(+) = UDP-N-acetyl-alpha-D-glucosamine + diphosphate. Its pathway is nucleotide-sugar biosynthesis; UDP-N-acetyl-alpha-D-glucosamine biosynthesis; N-acetyl-alpha-D-glucosamine 1-phosphate from alpha-D-glucosamine 6-phosphate (route II): step 2/2. It functions in the pathway nucleotide-sugar biosynthesis; UDP-N-acetyl-alpha-D-glucosamine biosynthesis; UDP-N-acetyl-alpha-D-glucosamine from N-acetyl-alpha-D-glucosamine 1-phosphate: step 1/1. It participates in bacterial outer membrane biogenesis; LPS lipid A biosynthesis. Functionally, catalyzes the last two sequential reactions in the de novo biosynthetic pathway for UDP-N-acetylglucosamine (UDP-GlcNAc). The C-terminal domain catalyzes the transfer of acetyl group from acetyl coenzyme A to glucosamine-1-phosphate (GlcN-1-P) to produce N-acetylglucosamine-1-phosphate (GlcNAc-1-P), which is converted into UDP-GlcNAc by the transfer of uridine 5-monophosphate (from uridine 5-triphosphate), a reaction catalyzed by the N-terminal domain. The protein is Bifunctional protein GlmU of Acinetobacter baumannii (strain AYE).